A 904-amino-acid polypeptide reads, in one-letter code: MVTTASAPSEDRAKPTLMLLDGNSLAFRAFYALPAENFKTRGGLTTNAVYGFTAMLINLLRDEAPTHIAAAFDVSRQTFRLQRYPEYKANRSSTPDEFAGQIDITKEVLGALGITVLSEPGFEADDLIATLATQAENEGYRVLVVTGDRDALQLVSDDVTVLYPRKGVSELTRFTPEAVVEKYGLTPRQYPDFAALRGDPSDNLPGIPGVGEKTAAKWIAEYGSLRSLVDNVDAVRGKVGDALRANLASVVRNRELTDLVRDVPLAQTPDTLRLQPWDRDHIHRLFDDLEFRVLRDRLFDTLAAAGGPEVDEGFDVRGGALAPGTVRQWLAEHAGDGRRAGLTVVGTHLPHGGDATAMAVAAADGEGAYLDTATLTPDDDAALAAWLADPAKPKALHEAKAAVHDLAGRGWTLEGVTSDTALAAYLVRPGQRSFTLDDLSLRYLRRELRAETPQQQQLSLLDDDDTDAETIQTTILRARAVIDLADALDAELARIDSTALLGEMELPVQRVLAKMESAGIAVDLPMLTELQSQFGDQIRDAAEAAYGVIGKQINLGSPKQLQVVLFDELGMPKTKRTKTGYTTDADALQSLFDKTGHPFLQHLLAHRDVTRLKVTVDGLLQAVAADGRIHTTFNQTIAATGRLSSTEPNLQNIPIRTDAGRRIRDAFVVGDGYAELMTADYSQIEMRIMAHLSGDEGLIEAFNTGEDLHSFVASRAFGVPIDEVTGELRRRVKAMSYGLAYGLSAYGLSQQLKISTEEANEQMDAYFARFGGVRDYLRAVVERARKDGYTSTVLGRRRYLPELDSSNRQVREAAERAALNAPIQGSAADIIKVAMIQVDKALNEAQLASRMLLQVHDELLFEIAPGERERVEALVRDKMGGAYPLDVPLEVSVGYGRSWDAAAH.

Residues 186–279 (TPRQYPDFAA…DTLRLQPWDR (94 aa)) enclose the 5'-3' exonuclease domain. The 3'-5' exonuclease domain maps to 317 to 493 (RGGALAPGTV…LADALDAELA (177 aa)).

The protein belongs to the DNA polymerase type-A family. Single-chain monomer with multiple functions.

The enzyme catalyses DNA(n) + a 2'-deoxyribonucleoside 5'-triphosphate = DNA(n+1) + diphosphate. Functionally, in addition to polymerase activity, this DNA polymerase exhibits 3'-5' and 5'-3' exonuclease activity. This is DNA polymerase I (polA) from Mycobacterium bovis (strain ATCC BAA-935 / AF2122/97).